The following is a 188-amino-acid chain: MKISANSIRTGNILVYNNDLWVVSKTPEHTQPGKGGAYVQVEMKNLKTGTKRNERFSSADYLDKAELEQKDYQFLYFEGDDLVLMDTKHFDQINISKEMLEEKLSFLTENIIVKVEFYNDKPLNIELPPTVILEISETDPVIKGATATASYKPAILENGIKVKVPQYLEIGEKIVVKTDDMTYVERAK.

Belongs to the elongation factor P family.

Its subcellular location is the cytoplasm. Its pathway is protein biosynthesis; polypeptide chain elongation. Its function is as follows. Involved in peptide bond synthesis. Stimulates efficient translation and peptide-bond synthesis on native or reconstituted 70S ribosomes in vitro. Probably functions indirectly by altering the affinity of the ribosome for aminoacyl-tRNA, thus increasing their reactivity as acceptors for peptidyl transferase. The chain is Elongation factor P from Rickettsia peacockii (strain Rustic).